The chain runs to 77 residues: Metallothionein-like protein 2 (77 aa).

The protein belongs to the metallothionein superfamily. Type 15 family.

Its function is as follows. Metallothioneins have a high content of cysteine residues that bind various heavy metals. This Trifolium repens (Creeping white clover) protein is Metallothionein-like protein 2 (MT1A).